The sequence spans 382 residues: Anhydro-N-acetylmuramic acid kinase (382 aa).

Residue 15–22 (GTSLDGVD) participates in ATP binding.

This sequence belongs to the anhydro-N-acetylmuramic acid kinase family.

The enzyme catalyses 1,6-anhydro-N-acetyl-beta-muramate + ATP + H2O = N-acetyl-D-muramate 6-phosphate + ADP + H(+). It functions in the pathway amino-sugar metabolism; 1,6-anhydro-N-acetylmuramate degradation. Its pathway is cell wall biogenesis; peptidoglycan recycling. Catalyzes the specific phosphorylation of 1,6-anhydro-N-acetylmuramic acid (anhMurNAc) with the simultaneous cleavage of the 1,6-anhydro ring, generating MurNAc-6-P. Is required for the utilization of anhMurNAc either imported from the medium or derived from its own cell wall murein, and thus plays a role in cell wall recycling. This Haemophilus influenzae (strain ATCC 51907 / DSM 11121 / KW20 / Rd) protein is Anhydro-N-acetylmuramic acid kinase.